Reading from the N-terminus, the 114-residue chain is Astacin-like metalloprotease toxin 4 (114 aa).

Positions 1 to 114 (RETNENDYVD…GLLCLFKGSV (114 aa)) constitute a Peptidase M12A domain. C17 and C38 are oxidised to a cystine. H46 contributes to the Zn(2+) binding site. The active site involves E47. Zn(2+) contacts are provided by H50 and H56. N88 is a glycosylation site (N-linked (GlcNAc...) asparagine).

Monomer. The cofactor is Zn(2+). In terms of tissue distribution, expressed by the venom gland.

The protein resides in the secreted. Its activity is regulated as follows. Inhibited by 1,10-phenanthroline. Zinc metalloprotease. Provoques deadhesion of endothelial cells from cell cultures, and also degradation of fibronectin, fibrinogen and gelatin in vitro. Its role in the venom is not fully understood but it might act as a spreading factor that facilitates diffusion of other venom toxins. Alternatively, it might be involved in the proteolytic processing of other venom toxins or it might play a role in extra-oral digestion of prey. This is Astacin-like metalloprotease toxin 4 from Loxosceles laeta (South American recluse spider).